Here is a 632-residue protein sequence, read N- to C-terminus: 1-deoxy-D-xylulose-5-phosphate synthase (632 aa).

Residues histidine 87 and 128 to 130 (GHS) each bind thiamine diphosphate. Aspartate 159 contacts Mg(2+). Thiamine diphosphate is bound by residues 160 to 161 (GA), asparagine 188, phenylalanine 295, and glutamate 377. Mg(2+) is bound at residue asparagine 188.

It belongs to the transketolase family. DXPS subfamily. In terms of assembly, homodimer. It depends on Mg(2+) as a cofactor. Thiamine diphosphate is required as a cofactor.

The catalysed reaction is D-glyceraldehyde 3-phosphate + pyruvate + H(+) = 1-deoxy-D-xylulose 5-phosphate + CO2. The protein operates within metabolic intermediate biosynthesis; 1-deoxy-D-xylulose 5-phosphate biosynthesis; 1-deoxy-D-xylulose 5-phosphate from D-glyceraldehyde 3-phosphate and pyruvate: step 1/1. Its function is as follows. Catalyzes the acyloin condensation reaction between C atoms 2 and 3 of pyruvate and glyceraldehyde 3-phosphate to yield 1-deoxy-D-xylulose-5-phosphate (DXP). The chain is 1-deoxy-D-xylulose-5-phosphate synthase from Stutzerimonas stutzeri (strain A1501) (Pseudomonas stutzeri).